The sequence spans 457 residues: Protein translocase subunit SecY (457 aa).

The Cytoplasmic portion of the chain corresponds to 1–20 (MGVIDVLAAVGERFPAVRKP). The helical transmembrane segment at 21–47 (ERKPTLYRRLAWTGVILVLYFIMSNIP) threads the bilayer. Residues 48 to 59 (LYGIPPQNIGGQ) are Extracellular-facing. An intramembrane region (helical) is located at residues 60–67 (VDLQRIIF). Residues 60–88 (VDLQRIIFASSAGTLMELGIGPIVTASLI) traverse the membrane as a discontinuously helical segment. Residues 68-79 (ASSAGTLMELGI) lie within the membrane without spanning it. The helical intramembrane region spans 80–88 (GPIVTASLI). At 89-109 (IQVLVGAKIIKLDLADPEGRR) the chain is on the cytoplasmic side. A helical membrane pass occupies residues 110–134 (KFTSAQKVLALAFAALEAVAFTVGG). Residues 135–146 (RYWVGTAIEPGP) lie on the Extracellular side of the membrane. A helical membrane pass occupies residues 147 to 171 (LDYALVSLQLFLGALLVIYFDEVMQ). The Cytoplasmic segment spans residues 172 to 178 (KGWGIGS). Residues 179–197 (AISLFILAGVAQGVVWSIF) form a helical membrane-spanning segment. Residues 198–229 (GTIPGVAQDYGLVPAIISNPDLTLLARPNGFP) are Extracellular-facing. Residues 230-251 (DLTGFFTTLAAIILLVYLQAMR) traverse the membrane as a helical segment. At 252-276 (VEIPITSERFKGIRSRVPLQFIYVT) the chain is on the cytoplasmic side. Residues 277-298 (NIPILLVGILVSDLLLVQRLLA) traverse the membrane as a helical segment. Residues 299–332 (DYLGVESRAYQIYSSIVYYLSPPRGVVQSIADPV) are Extracellular-facing. Residues 333-352 (KTAVFIASWTVLSIVFGYMW) form a helical membrane-spanning segment. Residues 353–395 (VEIAGLNPREQAERLIKGGLAIPGMRSDPRVLERVLRRYIYPL) lie on the Cytoplasmic side of the membrane. The chain crosses the membrane as a helical span at residues 396–414 (TFLSSLIVAALVIVADIFG). The Extracellular segment spans residues 415–417 (AYG). The chain crosses the membrane as a helical span at residues 418 to 432 (TGTGLLLAVGIINQY). Topologically, residues 433-457 (YAMITRERALETYPLLRRILGEEVV) are cytoplasmic.

It belongs to the SecY/SEC61-alpha family. As to quaternary structure, component of the Sec protein translocase complex. Heterotrimer consisting of alpha (SecY), beta (SecG) and gamma (SecE) subunits. The heterotrimers can form oligomers, although 1 heterotrimer is thought to be able to translocate proteins. Interacts with the ribosome. May interact with SecDF, and other proteins may be involved.

The protein localises to the cell membrane. Its function is as follows. The central subunit of the protein translocation channel SecYEG. Consists of two halves formed by TMs 1-5 and 6-10. These two domains form a lateral gate at the front which open onto the bilayer between TMs 2 and 7, and are clamped together by SecE at the back. The channel is closed by both a pore ring composed of hydrophobic SecY resides and a short helix (helix 2A) on the extracellular side of the membrane which forms a plug. The plug probably moves laterally to allow the channel to open. The ring and the pore may move independently. The protein is Protein translocase subunit SecY of Aeropyrum pernix (strain ATCC 700893 / DSM 11879 / JCM 9820 / NBRC 100138 / K1).